The chain runs to 413 residues: Phosphopentomutase (413 aa).

Asp-11, Asp-306, His-311, Asp-347, His-348, and His-359 together coordinate Mn(2+).

This sequence belongs to the phosphopentomutase family. Mn(2+) is required as a cofactor.

The protein localises to the cytoplasm. It catalyses the reaction 2-deoxy-alpha-D-ribose 1-phosphate = 2-deoxy-D-ribose 5-phosphate. The enzyme catalyses alpha-D-ribose 1-phosphate = D-ribose 5-phosphate. It participates in carbohydrate degradation; 2-deoxy-D-ribose 1-phosphate degradation; D-glyceraldehyde 3-phosphate and acetaldehyde from 2-deoxy-alpha-D-ribose 1-phosphate: step 1/2. Functionally, isomerase that catalyzes the conversion of deoxy-ribose 1-phosphate (dRib-1-P) and ribose 1-phosphate (Rib-1-P) to deoxy-ribose 5-phosphate (dRib-5-P) and ribose 5-phosphate (Rib-5-P), respectively. The polypeptide is Phosphopentomutase (Helicobacter pylori (strain Shi470)).